Reading from the N-terminus, the 195-residue chain is L-rhamnose-binding lectin CSL2 (195 aa).

SUEL-type lectin domains follow at residues threonine 1–leucine 97 and threonine 104–glycine 195.

L-rhamnose binding lectin. Has hemagglutinating activity towards rabbit erythrocytes and human type B erythrocytes. Hemagglutinating activity is inhibited by smooth-type lipopolysaccharide (LPS) from S.flexneri 1A and E.coli K12, but not by rough-type LPS from S.flexneri, E.coli K12 and E.coli EH100. Agglutinates E.coli K12 and B.subtilis. The sequence is that of L-rhamnose-binding lectin CSL2 from Oncorhynchus keta (Chum salmon).